Reading from the N-terminus, the 153-residue chain is 6,7-dimethyl-8-ribityllumazine synthase (153 aa).

5-amino-6-(D-ribitylamino)uracil-binding positions include Phe-21, 55-57 (AFE), and 79-81 (TVI). Residue 84 to 85 (AT) coordinates (2S)-2-hydroxy-3-oxobutyl phosphate. His-87 functions as the Proton donor in the catalytic mechanism. Phe-112 is a binding site for 5-amino-6-(D-ribitylamino)uracil. Arg-126 contacts (2S)-2-hydroxy-3-oxobutyl phosphate.

The protein belongs to the DMRL synthase family. Forms an icosahedral capsid composed of 60 subunits, arranged as a dodecamer of pentamers.

It carries out the reaction (2S)-2-hydroxy-3-oxobutyl phosphate + 5-amino-6-(D-ribitylamino)uracil = 6,7-dimethyl-8-(1-D-ribityl)lumazine + phosphate + 2 H2O + H(+). It functions in the pathway cofactor biosynthesis; riboflavin biosynthesis; riboflavin from 2-hydroxy-3-oxobutyl phosphate and 5-amino-6-(D-ribitylamino)uracil: step 1/2. Its function is as follows. Catalyzes the formation of 6,7-dimethyl-8-ribityllumazine by condensation of 5-amino-6-(D-ribitylamino)uracil with 3,4-dihydroxy-2-butanone 4-phosphate. This is the penultimate step in the biosynthesis of riboflavin. This chain is 6,7-dimethyl-8-ribityllumazine synthase, found in Bacillus cereus (strain G9842).